A 505-amino-acid polypeptide reads, in one-letter code: MSPREIEVSEPREVGITELVLRDAHQSLMATRMAMEDMVGACADIDAAGYWSVECWGGATYDSCIRFLNEDPWERLRTFRKLMPNSRLQMLLRGQNLLGYRHYNDEVVDRFVDKSAENGMDVFRVFDAMNDPRNMAHAMAAVKKAGKHAQGTICYTISPVHTVEGYVKLAGQLLDMGADSIALKDMAALLKPQPAYDIIKAIKDTYGQKTQINLHCHSTTGVTEVSLMKAIEAGVDVVDTAISSMSLGPGHNPTESVAEMLEGTGYTTNLDYDRLHKIRDHFKAIRPKYKKFESKTLVDTSIFKSQIPGGMLSNMESQLRAQGAEDKMDEVMAEVPRVRKAAGFPPLVTPSSQIVGTQAVFNVMMGEYKRMTGEFADIMLGYYGASPADRDPKVVKLAEEQSGKKPITQRPADLLPPEWEKQSKEAATLKGFNGTDEDVLTYALFPQVAPVFFEHRAEGPHSVALTDAQLKAEAEGDEKSLAVAGPVTYNVNVGGTVREVTVQQA.

A Pyruvate carboxyltransferase domain is found at 14–276 (VGITELVLRD…TTNLDYDRLH (263 aa)). Substrate-binding positions include 22-26 (RDAHQ), A59, and K184. D23 contacts Co(2+). K184, H215, and H217 together coordinate Co(2+). Residue K184 is modified to N6-carboxylysine; partial.

In terms of assembly, homodimer. Transcarboxylase is composed of three subunits: 1.3S, 5S, and 12S. The core of the enzyme is composed of six 12S subunits. On each side of the core there are three pairs of 5S subunits. Each 5S dimer is attached to the core by two 1.3S subunits. Thus the total number of chains is 30 (6 + 12 + 12). It depends on Co(2+) as a cofactor. Post-translationally, lys-184 is carboxylated in the free enzyme and helps to coordinate the cobalt ion. Lys-184 is partially carboxylated in the complex with pyruvate, but is not carboxylated in the oxaloacetate-bound form.

The catalysed reaction is (S)-methylmalonyl-CoA + pyruvate = propanoyl-CoA + oxaloacetate. The 5S subunit specifically catalyzes the transfer of the carboxyl group from biotin of the 1.3S subunit to pyruvate to form oxaloacetate and 1.3S biotin. The chain is Methylmalonyl-CoA carboxyltransferase 5S subunit from Propionibacterium freudenreichii subsp. shermanii.